Here is a 412-residue protein sequence, read N- to C-terminus: Eukaryotic initiation factor 4A-2 (412 aa).

Ala2 carries the N-acetylalanine modification. Positions 39–67 (ESFDAMGLQENLLRGIYAYGFEKPSAIQQ) match the Q motif motif. The 171-residue stretch at 70-240 (IVPFCKGLDV…RKFMSKPVRI (171 aa)) folds into the Helicase ATP-binding domain. 83–90 (AQSGTGKT) is an ATP binding site. Thr145 is subject to Phosphothreonine. A DEAD box motif is present at residues 188–191 (DEAD). Residues 251–412 (GIKQFYVNVE…ELPSNVADLL (162 aa)) enclose the Helicase C-terminal domain.

Belongs to the DEAD box helicase family. eIF4A subfamily. In terms of assembly, eIF4F is a multi-subunit complex, the composition of which varies with external and internal environmental conditions. It is composed of at least EIF4A, EIF4E and EIF4G. As to expression, ubiquitous. Preferentially expressed in flowers, young leaves and roots.

The protein resides in the cytoplasm. The enzyme catalyses ATP + H2O = ADP + phosphate + H(+). Its function is as follows. ATP-dependent RNA helicase which is a subunit of the eIF4F complex involved in cap recognition and is required for mRNA binding to ribosome. In the current model of translation initiation, eIF4A unwinds RNA secondary structures in the 5'-UTR of mRNAs which is necessary to allow efficient binding of the small ribosomal subunit, and subsequent scanning for the initiator codon. This is Eukaryotic initiation factor 4A-2 (TIF4A-2) from Arabidopsis thaliana (Mouse-ear cress).